A 415-amino-acid chain; its full sequence is Serine hydroxymethyltransferase (415 aa).

(6S)-5,6,7,8-tetrahydrofolate is bound by residues Leu-117 and 121-123 (GHL). The residue at position 226 (Lys-226) is an N6-(pyridoxal phosphate)lysine.

The protein belongs to the SHMT family. In terms of assembly, homodimer. Requires pyridoxal 5'-phosphate as cofactor.

The protein localises to the cytoplasm. It carries out the reaction (6R)-5,10-methylene-5,6,7,8-tetrahydrofolate + glycine + H2O = (6S)-5,6,7,8-tetrahydrofolate + L-serine. The protein operates within one-carbon metabolism; tetrahydrofolate interconversion. Its pathway is amino-acid biosynthesis; glycine biosynthesis; glycine from L-serine: step 1/1. Its function is as follows. Catalyzes the reversible interconversion of serine and glycine with tetrahydrofolate (THF) serving as the one-carbon carrier. This reaction serves as the major source of one-carbon groups required for the biosynthesis of purines, thymidylate, methionine, and other important biomolecules. Also exhibits THF-independent aldolase activity toward beta-hydroxyamino acids, producing glycine and aldehydes, via a retro-aldol mechanism. This is Serine hydroxymethyltransferase from Dehalococcoides mccartyi (strain CBDB1).